A 205-amino-acid chain; its full sequence is Isochorismatase domain-containing protein 2 (205 aa).

2 positions are modified to phosphoserine: Ser-7 and Ser-202.

The protein belongs to the isochorismatase family. In terms of assembly, interacts with CDKN2A.

It localises to the cytoplasm. The protein localises to the nucleus. This is Isochorismatase domain-containing protein 2 (ISOC2) from Pongo abelii (Sumatran orangutan).